The chain runs to 99 residues: UPF0235 protein Neut_2146 (99 aa).

Belongs to the UPF0235 family.

In Nitrosomonas eutropha (strain DSM 101675 / C91 / Nm57), this protein is UPF0235 protein Neut_2146.